A 643-amino-acid chain; its full sequence is Phosphatidylinositol-3,5-bisphosphate 3-phosphatase MTMR2 (643 aa).

Polar residues-rich tracts occupy residues 1–12 (MEKSSSCESLGS) and 23–40 (DSLS…VHTK). Residues 1-54 (MEKSSSCESLGSQPAVARPPSVDSLSSASTSHSENSVHTKSASVVSSDSISTSA) form a disordered region. Phosphoserine is present on residues Ser-6 and Ser-9. Low complexity predominate over residues 41–54 (SASVVSSDSISTSA). Ser-58 bears the Phosphoserine mark. One can recognise a GRAM domain in the interval 68–139 (NKLAEMEEPP…GVISRVEKIG (72 aa)). Residues 205 to 580 (GWKLYDSLSE…RHLELWVGYY (376 aa)) enclose the Myotubularin phosphatase domain. A 1,2-diacyl-sn-glycero-3-phospho-(1D-myo-inositol-3,5-bisphosphate) contacts are provided by Asn-330, Asn-355, and Ile-356. The a 1,2-diacyl-sn-glycero-3-phospho-(1D-myo-inositol-3-phosphate) site is built by Asn-330, Asn-355, and Ile-356. Cys-417 serves as the catalytic Phosphocysteine intermediate. A 1,2-diacyl-sn-glycero-3-phospho-(1D-myo-inositol-3,5-bisphosphate) is bound by residues Ser-418, Asp-419, Gly-420, Trp-421, Asp-422, Arg-423, Arg-459, and Arg-463. Residues Ser-418, Asp-419, Gly-420, Trp-421, Asp-422, and Arg-423 each contribute to the a 1,2-diacyl-sn-glycero-3-phospho-(1D-myo-inositol-3-phosphate) site. Residue Arg-463 participates in a 1,2-diacyl-sn-glycero-3-phospho-(1D-myo-inositol-3-phosphate) binding. A coiled-coil region spans residues 593-627 (IHNRYKELLAKRAELQKKVEELQREISNRSTSSSE). The interval 614–643 (LQREISNRSTSSSERAGSPAQCVTPVQTVV) is disordered.

Belongs to the protein-tyrosine phosphatase family. Non-receptor class myotubularin subfamily. Homodimer (via coiled-coil domain). Heterotetramer consisting of one MTMR2 dimer and one SBF2/MTMR13 dimer; specifically in peripheral nerves stabilizes SBF2/MTMR13 at the membranes and increases MTMR2 catalytic activity towards phosphatidylinositol 3,5-bisphosphate and to a lesser extent towards phosphatidylinositol 3-phosphate. Heterodimer with SBF1/MTMR5; acts as an adapter for the phosphatase MTMR2 to regulate MTMR2 catalytic activity and subcellular location. Heterodimer with MTMR12. In terms of processing, phosphorylation at Ser-58 decreases MTMR2 localization to endocytic vesicular structures.

The protein resides in the cytoplasm. The protein localises to the early endosome membrane. Its subcellular location is the perinuclear region. It is found in the cell projection. It localises to the axon. The protein resides in the endosome membrane. It catalyses the reaction a 1,2-diacyl-sn-glycero-3-phospho-(1D-myo-inositol-3,5-bisphosphate) + H2O = a 1,2-diacyl-sn-glycero-3-phospho-(1D-myo-inositol-5-phosphate) + phosphate. The enzyme catalyses a 1,2-diacyl-sn-glycero-3-phospho-(1D-myo-inositol-3-phosphate) + H2O = a 1,2-diacyl-sn-glycero-3-phospho-(1D-myo-inositol) + phosphate. It carries out the reaction 1,2-dioctanoyl-sn-glycero-3-phospho-(1-D-myo-inositol-3-phosphate) + H2O = 1,2-dioctanoyl-sn-glycero-3-phospho-(1D-myo-inositol) + phosphate. The catalysed reaction is 1,2-dioctanoyl-sn-glycero-3-phospho-(1D-myo-inositol-3,5-bisphosphate) + H2O = 1,2-dioctanoyl-sn-glycero-3-phospho-(1D-myo-inositol-5-phosphate) + phosphate. Its function is as follows. Lipid phosphatase that specifically dephosphorylates the D-3 position of phosphatidylinositol 3-phosphate and phosphatidylinositol 3,5-bisphosphate, generating phosphatidylinositol and phosphatidylinositol 5-phosphate. Regulates the level of these phosphoinositides critical for various biological processes including autophagy initiation and autophagosome maturation. This chain is Phosphatidylinositol-3,5-bisphosphate 3-phosphatase MTMR2, found in Bos taurus (Bovine).